Consider the following 1010-residue polypeptide: Importin-8 (1010 aa).

In terms of domain architecture, Importin N-terminal spans 22–102 (AETELNQSYK…RDNIVEGIIR (81 aa)). Residues 886-895 (NHSKAEKVDI) are compositionally biased toward basic and acidic residues. A disordered region spans residues 886–932 (NHSKAEKVDIEENEEISSEEEEETSVSAQAMQSQIGRSEEEDDDDWD). Acidic residues predominate over residues 896-909 (EENEEISSEEEEET). Phosphoserine occurs at positions 902 and 903. Over residues 910 to 921 (SVSAQAMQSQIG) the composition is skewed to polar residues.

The protein belongs to the importin beta family. As to quaternary structure, forms a heterodimer with KPNB1. Interacts with SRP19. Interacts with RPL23A. Binds directly to nuclear pore complexes. Interacts with LRPPRC; the interaction occurs when LRPPRC is in its RNA-free form and promotes import of LRPPRC to the nucleus to allow for EIF4E-mediated export of mRNAS from the nucleus to the cytoplasm.

It is found in the cytoplasm. It localises to the nucleus. In terms of biological role, involved in nuclear protein import, either by acting as autonomous nuclear transport receptor or as an adapter-like protein in association with the importin-beta subunit KPNB1. Acting autonomously, may serve as receptor for nuclear localization signals (NLS) and promote translocation of import substrates through the nuclear pore complex (NPC) by an energy requiring, Ran-dependent mechanism. At the nucleoplasmic side of the NPC, Ran binds to importin, the importin/substrate complex dissociates and importin is re-exported from the nucleus to the cytoplasm where GTP hydrolysis releases Ran. The directionality of nuclear import is thought to be conferred by an asymmetric distribution of the GTP- and GDP-bound forms of Ran between the cytoplasm and nucleus. In vitro mediates the nuclear import of the signal recognition particle protein SRP19. May also be involved in cytoplasm-to-nucleus shuttling of a broad spectrum of other cargos, including Argonaute-microRNAs complexes, the JUN protein, RELA/NF-kappa-B p65 subunit, the translation initiation factor EIF4E and a set of receptor-activated mothers against decapentaplegic homolog (SMAD) transcription factors that play a critical role downstream of the large family of transforming growth factor beta and bone morphogenetic protein (BMP) cytokines. This is Importin-8 from Mus musculus (Mouse).